A 510-amino-acid chain; its full sequence is Aspartate kinase FUB3 (510 aa).

ACT domains are found at residues 372–440 (ILSN…VLPD) and 446–510 (LVGA…KNAM).

Belongs to the aspartokinase family.

It carries out the reaction L-aspartate + ATP = 4-phospho-L-aspartate + ADP. It functions in the pathway mycotoxin biosynthesis. Functionally, aspartate kinase; part of the gene cluster that mediates the biosynthesis of fusaric acid, a mycotoxin with low to moderate toxicity to animals and humans, but with high phytotoxic properties. L-aspartate is suggested as fusaric acid amino acid precursor that is activated and further processed to O-acetyl-L-homoserine by cluster enzymes aspartate kinase FUB3 and homoserine O-acetyltransferase FUB5, as well as enzymes of the primary metabolism. The polyketide synthase (PKS) FUB1 generates the triketide trans-2-hexenal which is presumptively released by the hydrolase FUB4 and linked to the NRPS-bound amino acid precursor by NAD(P)-dependent dehydrogenase FUB6. FUB1, FUB4, and the non-canonical NRPS Fub8 may form an enzyme complex. Further processing of the NRPS-bound intermediate might be carried out by FUB6 and the sulfhydrylase FUB7, enabling a spontaneous electrocyclization to close the carbon backbone of fusaric acid. Dihydrofusaric acid is likely to be released via reduction by the thioester reductase (TR) domain of FUB8 whereupon the final oxidation to fusaric acid may (also) be performed by the FMN-dependent dehydrogenase FUB9. In Gibberella moniliformis (strain M3125 / FGSC 7600) (Maize ear and stalk rot fungus), this protein is Aspartate kinase FUB3.